The chain runs to 313 residues: FAM172 family protein homolog Y75B8A.31 (313 aa).

Residues 293-313 (VKSENSKESDDEAPKSKKICV) are disordered. Positions 296–307 (ENSKESDDEAPK) are enriched in basic and acidic residues.

The protein belongs to the FAM172 family.

This Caenorhabditis elegans protein is FAM172 family protein homolog Y75B8A.31.